We begin with the raw amino-acid sequence, 98 residues long: Co-chaperonin GroES (98 aa).

Belongs to the GroES chaperonin family. As to quaternary structure, heptamer of 7 subunits arranged in a ring. Interacts with the chaperonin GroEL.

The protein resides in the cytoplasm. Its function is as follows. Together with the chaperonin GroEL, plays an essential role in assisting protein folding. The GroEL-GroES system forms a nano-cage that allows encapsulation of the non-native substrate proteins and provides a physical environment optimized to promote and accelerate protein folding. GroES binds to the apical surface of the GroEL ring, thereby capping the opening of the GroEL channel. This Leifsonia xyli subsp. xyli (strain CTCB07) protein is Co-chaperonin GroES.